The following is a 154-amino-acid chain: Vimentin (154 aa).

A compositionally biased stretch (low complexity) spans 1–13 (MSTRSVSSSSYRR). The segment at 1 to 31 (MSTRSVSSSSYRRMFGGPGTASRPSSTRSYV) is disordered. S2 carries the N-acetylserine modification. Residues 2 to 95 (STRSVSSSSY…FSLADAINTE (94 aa)) are head. The residue at position 5 (S5) is a Phosphoserine. S7 carries the phosphoserine; by PKA and PKC; alternate modification. S7 carries an O-linked (GlcNAc) serine; alternate glycan. S8 carries the post-translational modification Phosphoserine. Phosphoserine; by PKC is present on residues S9 and S10. T20 carries the phosphothreonine modification. Phosphoserine; by PKA and PKC is present on S25. At S26 the chain carries Phosphoserine; by PKC. O-linked (GlcNAc) threonine glycosylation is present at T33. An O-linked (GlcNAc) serine; alternate glycan is attached at S34. Phosphoserine; by PKC; alternate is present on S34. S39 bears the Phosphoserine; by CaMK2, PKA, PKC and ROCK2 mark. S42 carries the post-translational modification Phosphoserine; by PKC. S49 is subject to Phosphoserine. Y53 carries the post-translational modification Phosphotyrosine. S55 carries the phosphoserine modification. At S56 the chain carries Phosphoserine; by CDK5 and CDK1. Position 61 is a phosphotyrosine (Y61). S66 bears the Phosphoserine; by PKA and PKC mark. A Phosphoserine; by AURKB and ROCK2 modification is found at S72. At S83 the chain carries Phosphoserine; by CaMK2. S87 is modified (phosphoserine). The segment at 96-131 (FKNTRTNEKVELQELNDRFANYIDKVRFLEQQNKIL) is coil 1A. A coiled-coil region spans residues 96-131 (FKNTRTNEKVELQELNDRFANYIDKVRFLEQQNKIL). Residues 103–154 (EKVELQELNDRFANYIDKVRFLEQQNKILLAELEQLKGQGKSRLGHLYEEEM) enclose the IF rod domain. A Glycyl lysine isopeptide (Lys-Gly) (interchain with G-Cter in SUMO2) cross-link involves residue K104. Y117 is subject to Phosphotyrosine. N6-acetyllysine; alternate occurs at positions 120, 129, and 139. K120 and K129 each carry N6-succinyllysine; alternate. Residues K120, K129, and K139 each participate in a glycyl lysine isopeptide (Lys-Gly) (interchain with G-Cter in SUMO2); alternate cross-link. The linker 1 stretch occupies residues 132 to 153 (LAELEQLKGQGKSRLGHLYEEE). Residue S144 is modified to Phosphoserine. Position 154 (M154) is a region of interest, coil 1B.

Belongs to the intermediate filament family. In terms of assembly, homomer assembled from elementary dimers. Identified in complexes that contain VIM, EZR, AHNAK, BFSP1, BFSP2, ANK2, PLEC, PRX and spectrin. Interacts with BCAS3. Interacts with LGSN. Interacts with SYNM. Interacts (via rod region) with PLEC (via CH 1 domain). Interacts with STK33. Interacts with LARP6. Interacts with RAB8B. Interacts with TOR1A; the interaction associates TOR1A with the cytoskeleton. Interacts with TOR1AIP1. Interacts with TOR1AIP1. Interacts with DIAPH1. Interacts with EPPK1; interaction is dependent of higher-order structure of intermediate filament. Interacts with the non-receptor tyrosine kinase SRMS; the interaction leads to phosphorylation of VIM. Interacts with NOD2. Interacts (via head region) with CORO1C. Interacts with HDGF. Interacts with PRKCE (via phorbol-ester/DAG-type 2 domain). Interacts with BFSP2. Interacts with PPL. Interacts with PKP1 and PKP2. Interacts with SCRIB (via PDZ domains); the interaction protects SCRIB from proteasomal degradation and facilitates SCRIB localization to intermediate filaments, the interaction is reduced by cell contact inhibition. One of the most prominent phosphoproteins in various cells of mesenchymal origin. Phosphorylation is enhanced during cell division, at which time vimentin filaments are significantly reorganized. Phosphorylation by PKN1 inhibits the formation of filaments. Filament disassembly during mitosis is promoted by phosphorylation at Ser-55 as well as by nestin. Phosphorylated at Ser-56 by CDK5 during neutrophil secretion in the cytoplasm. Phosphorylated by STK33. Phosphorylated on tyrosine residues by SRMS.

It localises to the cytoplasm. The protein localises to the cytoskeleton. The protein resides in the nucleus matrix. Its subcellular location is the cell membrane. Vimentins are class-III intermediate filaments found in various non-epithelial cells, especially mesenchymal cells. Vimentin is attached to the nucleus, endoplasmic reticulum, and mitochondria, either laterally or terminally. Plays a role in cell directional movement, orientation, cell sheet organization and Golgi complex polarization at the cell migration front. Protects SCRIB from proteasomal degradation and facilitates its localization to intermediate filaments in a cell contact-mediated manner. Its function is as follows. Involved with LARP6 in the stabilization of type I collagen mRNAs for CO1A1 and CO1A2. The chain is Vimentin (VIM) from Ovis aries (Sheep).